The sequence spans 45 residues: uncharacterized protein (45 aa).

Belongs to the asfivirus C62L family.

This is an uncharacterized protein from Ornithodoros (relapsing fever ticks).